Here is a 389-residue protein sequence, read N- to C-terminus: Lipid-A-disaccharide synthase (389 aa).

It belongs to the LpxB family.

The catalysed reaction is a lipid X + a UDP-2-N,3-O-bis[(3R)-3-hydroxyacyl]-alpha-D-glucosamine = a lipid A disaccharide + UDP + H(+). It participates in bacterial outer membrane biogenesis; LPS lipid A biosynthesis. Its function is as follows. Condensation of UDP-2,3-diacylglucosamine and 2,3-diacylglucosamine-1-phosphate to form lipid A disaccharide, a precursor of lipid A, a phosphorylated glycolipid that anchors the lipopolysaccharide to the outer membrane of the cell. This Histophilus somni (strain 2336) (Haemophilus somnus) protein is Lipid-A-disaccharide synthase.